The primary structure comprises 715 residues: DNA ligase (715 aa).

NAD(+)-binding positions include 47-51 (DADYD), 96-97 (SL), and E128. K130 (N6-AMP-lysine intermediate) is an active-site residue. NAD(+) is bound by residues R151, E188, K306, and K330. 4 residues coordinate Zn(2+): C435, C438, C453, and C459. One can recognise a BRCT domain in the interval 637-715 (RRDTAVAGKT…EDEWLALIGN (79 aa)).

Belongs to the NAD-dependent DNA ligase family. LigA subfamily. Requires Mg(2+) as cofactor. Mn(2+) is required as a cofactor.

It catalyses the reaction NAD(+) + (deoxyribonucleotide)n-3'-hydroxyl + 5'-phospho-(deoxyribonucleotide)m = (deoxyribonucleotide)n+m + AMP + beta-nicotinamide D-nucleotide.. DNA ligase that catalyzes the formation of phosphodiester linkages between 5'-phosphoryl and 3'-hydroxyl groups in double-stranded DNA using NAD as a coenzyme and as the energy source for the reaction. It is essential for DNA replication and repair of damaged DNA. This is DNA ligase from Rhodopseudomonas palustris (strain ATCC BAA-98 / CGA009).